The sequence spans 173 residues: Lactoylglutathione lyase (173 aa).

The VOC domain occupies 24 to 170 (VFNHTMLRVK…DGYWVEVIQP (147 aa)). A Ni(2+)-binding site is contributed by His-27. Arg-31 lines the substrate pocket. Glu-93 is a Ni(2+) binding site. 3 residues coordinate substrate: Asn-97, Arg-116, and His-120. The Ni(2+) site is built by His-120 and Glu-166. Catalysis depends on Glu-166, which acts as the Proton donor/acceptor.

Belongs to the glyoxalase I family. Monomer. Ni(2+) is required as a cofactor. Requires Zn(2+) as cofactor.

It catalyses the reaction (R)-S-lactoylglutathione = methylglyoxal + glutathione. The protein operates within secondary metabolite metabolism; methylglyoxal degradation; (R)-lactate from methylglyoxal: step 1/2. Catalyzes the conversion of hemimercaptal, formed from methylglyoxal and glutathione, to S-lactoylglutathione. This is Lactoylglutathione lyase (gloA) from Pseudomonas putida (Arthrobacter siderocapsulatus).